Consider the following 230-residue polypeptide: MKRGKKYIQLKEKVDRTKAYTLGEAVGLAKATSYSKFDGTLEISTKINYKSLQNVRGTISLPHGTGKTIKVLVFCKGDKQNEAREAGADFVGDMDLIEKVSGGWTDFDACVATPDMMKEVGKLGPVLGRKGLMPKPKAGTVTTDVSKAVKELKAGRIEYRPDKGGVVHLGVGKCSFSDDKLSDNINAVVAALMKDKPSDAKGDYLKSFSVAATMGIGVKVDVKELVNANI.

Belongs to the universal ribosomal protein uL1 family. As to quaternary structure, part of the 50S ribosomal subunit.

Functionally, binds directly to 23S rRNA. The L1 stalk is quite mobile in the ribosome, and is involved in E site tRNA release. Protein L1 is also a translational repressor protein, it controls the translation of the L11 operon by binding to its mRNA. This chain is Large ribosomal subunit protein uL1, found in Leptospira biflexa serovar Patoc (strain Patoc 1 / Ames).